The following is a 184-amino-acid chain: UPF0149 protein PputGB1_5261 (184 aa).

It belongs to the UPF0149 family.

The sequence is that of UPF0149 protein PputGB1_5261 from Pseudomonas putida (strain GB-1).